The following is a 276-amino-acid chain: Undecaprenyl-diphosphatase (276 aa).

A run of 5 helical transmembrane segments spans residues 84–104 (YRLG…GLFF), 115–135 (LWVV…AEYV), 188–208 (FGFL…LPDA), 222–242 (QLLV…AWLL), and 250–270 (MYWF…LLAT).

Belongs to the UppP family.

It localises to the cell membrane. The enzyme catalyses di-trans,octa-cis-undecaprenyl diphosphate + H2O = di-trans,octa-cis-undecaprenyl phosphate + phosphate + H(+). Functionally, catalyzes the dephosphorylation of undecaprenyl diphosphate (UPP). Confers resistance to bacitracin. This Mycobacterium bovis (strain ATCC BAA-935 / AF2122/97) protein is Undecaprenyl-diphosphatase.